The sequence spans 338 residues: UDP-N-acetylglucosamine--N-acetylmuramyl-(pentapeptide) pyrophosphoryl-undecaprenol N-acetylglucosamine transferase (338 aa).

Residues 10–12 (TGG), Asn-122, Ser-177, and Gln-275 each bind UDP-N-acetyl-alpha-D-glucosamine.

Belongs to the glycosyltransferase 28 family. MurG subfamily.

It is found in the cell inner membrane. It carries out the reaction di-trans,octa-cis-undecaprenyl diphospho-N-acetyl-alpha-D-muramoyl-L-alanyl-D-glutamyl-meso-2,6-diaminopimeloyl-D-alanyl-D-alanine + UDP-N-acetyl-alpha-D-glucosamine = di-trans,octa-cis-undecaprenyl diphospho-[N-acetyl-alpha-D-glucosaminyl-(1-&gt;4)]-N-acetyl-alpha-D-muramoyl-L-alanyl-D-glutamyl-meso-2,6-diaminopimeloyl-D-alanyl-D-alanine + UDP + H(+). The protein operates within cell wall biogenesis; peptidoglycan biosynthesis. Its function is as follows. Cell wall formation. Catalyzes the transfer of a GlcNAc subunit on undecaprenyl-pyrophosphoryl-MurNAc-pentapeptide (lipid intermediate I) to form undecaprenyl-pyrophosphoryl-MurNAc-(pentapeptide)GlcNAc (lipid intermediate II). This chain is UDP-N-acetylglucosamine--N-acetylmuramyl-(pentapeptide) pyrophosphoryl-undecaprenol N-acetylglucosamine transferase, found in Sulfurovum sp. (strain NBC37-1).